The following is a 471-amino-acid chain: MAAAQPKYPAGATARRLARGCWSALWDYETPKVIVVRNRRLGVLYRAVQLLILLYFVWYVFIVQKSYQESETGPESSIITKVKGITTSEHKVWDVEEYVKPPEGGSVFSIITRVEATHSQTQGTCPESIRVHNATCLSDADCVAGELDMLGNGLRTGRCVPYYQGPSKTCEVFGWCPVEDGASVSQFLGTMAPNFTILIKNSIHYPKFHFSKGNIADRTDGYLKRCTFHEASDLYCPIFKLGFIVEKAGESFTELAHKGGVIGVIINWDCDLDLPASECNPKYSFRRLDPKHVPASSGYNFRFAKYYKINGTTTRTLIKAYGIRIDVIVHGQAGKFSLIPTIINLATALTSVGVGSFLCDWILLTFMNKNKVYSHKKFDKVCTPSHPSGSWPVTLARVLGQAPPEPGHRSEDQHPSPPSGQEGQQGAECGPAFPPLRPCPISAPSEQMVDTPASEPAQASTPTDPKGLAQL.

The Cytoplasmic segment spans residues 1–42; that stretch reads MAAAQPKYPAGATARRLARGCWSALWDYETPKVIVVRNRRLG. 6 disulfide bridges follow: Cys-21–Cys-439, Cys-125–Cys-176, Cys-136–Cys-159, Cys-142–Cys-170, Cys-226–Cys-236, and Cys-270–Cys-279. The chain crosses the membrane as a helical span at residues 43–63; sequence VLYRAVQLLILLYFVWYVFIV. The Extracellular portion of the chain corresponds to 64–337; it reads QKSYQESETG…IVHGQAGKFS (274 aa). 2 residues coordinate ATP: Lys-81 and Lys-83. Residue Asn-133 is glycosylated (N-linked (GlcNAc...) asparagine). N-linked (GlcNAc...) asparagine glycosylation occurs at Asn-194. Position 196 (Thr-196) interacts with ATP. ATP is bound by residues Ser-296, Asn-300, and Arg-302. Residue Asn-310 is glycosylated (N-linked (GlcNAc...) asparagine). Position 319 (Lys-319) interacts with ATP. The tract at residues 320–333 is pore-forming motif; it reads AYGIRIDVIVHGQA. A helical membrane pass occupies residues 338–358; sequence LIPTIINLATALTSVGVGSFL. Residues 359-471 are Cytoplasmic-facing; that stretch reads CDWILLTFMN…PTDPKGLAQL (113 aa). Residues 400–471 form a disordered region; it reads GQAPPEPGHR…PTDPKGLAQL (72 aa).

It belongs to the P2X receptor family. Homotrimer and heterotrimer; functional P2XRs are organized as homomeric and heteromeric trimers. Homotrimer. Forms heterotrimer with P2RX1. Forms heterotrimer with P2RX6. Forms heterotrimer with P2RX3. Expressed in both the central and peripheral nervous system, as well as in the pituitary gland.

It localises to the cell membrane. The catalysed reaction is Ca(2+)(in) = Ca(2+)(out). The enzyme catalyses K(+)(in) = K(+)(out). It catalyses the reaction Na(+)(in) = Na(+)(out). With respect to regulation, fast activation by external ATP. Exhibits slow desensitization during prolonged ATP activation. Not sensitive to the ATP agonist:alpha/beta-methylene-ATP. Functionally, ATP-gated nonselective transmembrane cation channel permeable to potassium, sodium and calcium. Activation by extracellular ATP induces a variety of cellular responses, such as excitatory postsynaptic responses in sensory neurons, neuromuscular junctions (NMJ) formation, hearing, perception of taste and peristalsis. In the inner ear, regulates sound transduction and auditory neurotransmission, outer hair cell electromotility, inner ear gap junctions, and K(+) recycling. Mediates synaptic transmission between neurons and from neurons to smooth muscle. This is P2X purinoceptor 2 from Homo sapiens (Human).